The sequence spans 472 residues: Trigger factor (472 aa).

Residues G174–P261 form the PPIase FKBP-type domain. A disordered region spans residues N433–S472. Residues K439 to K451 are compositionally biased toward basic and acidic residues.

It belongs to the FKBP-type PPIase family. Tig subfamily.

It is found in the cytoplasm. The enzyme catalyses [protein]-peptidylproline (omega=180) = [protein]-peptidylproline (omega=0). Functionally, involved in protein export. Acts as a chaperone by maintaining the newly synthesized protein in an open conformation. Functions as a peptidyl-prolyl cis-trans isomerase. The polypeptide is Trigger factor (Prochlorococcus marinus (strain NATL1A)).